Reading from the N-terminus, the 305-residue chain is MYNGILPVYKERGLTSHDVVFKLRKILKTKKIGHTGTLDPEVAGVLPVCIGNATRVSDYVMDMGKAYEATVSIGRSTTTEDQTGDTLEMKGVHSANFNNDDIDRLLESFKGIIEQIPPMYSSVKVNGKKLYEYARNNETVERPKRKVNIKDIGRISELDFKENECHFKIRVICGKGTYIRTLATDIGVKLGFPAHMSKLTRIESGGFVLKDSLTLEQIKELHEQDSLQNKLFPLEYGLKGLPSIKIKDSHIKKRILNGQKFNKNEFDNKIKDQIVFIDDDSEKVLAIYMVHPTKESEIKPKKVFN.

The active-site Nucleophile is the D39.

Belongs to the pseudouridine synthase TruB family. Type 1 subfamily.

It carries out the reaction uridine(55) in tRNA = pseudouridine(55) in tRNA. Functionally, responsible for synthesis of pseudouridine from uracil-55 in the psi GC loop of transfer RNAs. In Staphylococcus aureus (strain MRSA252), this protein is tRNA pseudouridine synthase B.